The following is a 210-amino-acid chain: Orotate phosphoribosyltransferase (210 aa).

Residues Arg-94, Lys-98, His-100, and 120 to 128 (EDLISTGGS) each bind 5-phospho-alpha-D-ribose 1-diphosphate. An orotate-binding site is contributed by Ser-124.

This sequence belongs to the purine/pyrimidine phosphoribosyltransferase family. PyrE subfamily. Homodimer. Requires Mg(2+) as cofactor.

It catalyses the reaction orotidine 5'-phosphate + diphosphate = orotate + 5-phospho-alpha-D-ribose 1-diphosphate. It participates in pyrimidine metabolism; UMP biosynthesis via de novo pathway; UMP from orotate: step 1/2. Catalyzes the transfer of a ribosyl phosphate group from 5-phosphoribose 1-diphosphate to orotate, leading to the formation of orotidine monophosphate (OMP). This chain is Orotate phosphoribosyltransferase, found in Bacillus cereus (strain G9842).